A 380-amino-acid polypeptide reads, in one-letter code: Cytochrome b (380 aa).

The next 4 membrane-spanning stretches (helical) occupy residues 33 to 53 (FGSL…FLAM), 77 to 98 (WLIR…FIHV), 113 to 133 (WNIG…GYVL), and 178 to 198 (FFAF…VHLL). H83 and H97 together coordinate heme b. 2 residues coordinate heme b: H182 and H196. An a ubiquinone-binding site is contributed by H201. 4 helical membrane passes run 226 to 246 (IKDL…VLFF), 288 to 308 (LGGV…PFLN), 320 to 340 (ITQF…WIGG), and 347 to 367 (FTTI…VLMP).

It belongs to the cytochrome b family. The cytochrome bc1 complex contains 11 subunits: 3 respiratory subunits (MT-CYB, CYC1 and UQCRFS1), 2 core proteins (UQCRC1 and UQCRC2) and 6 low-molecular weight proteins (UQCRH/QCR6, UQCRB/QCR7, UQCRQ/QCR8, UQCR10/QCR9, UQCR11/QCR10 and a cleavage product of UQCRFS1). This cytochrome bc1 complex then forms a dimer. The cofactor is heme b.

Its subcellular location is the mitochondrion inner membrane. Functionally, component of the ubiquinol-cytochrome c reductase complex (complex III or cytochrome b-c1 complex) that is part of the mitochondrial respiratory chain. The b-c1 complex mediates electron transfer from ubiquinol to cytochrome c. Contributes to the generation of a proton gradient across the mitochondrial membrane that is then used for ATP synthesis. This Thomasomys ischyrus (Strong-tailed oldfield mouse) protein is Cytochrome b (MT-CYB).